Reading from the N-terminus, the 307-residue chain is tRNA dimethylallyltransferase 2 (307 aa).

ATP is bound at residue glycine 9–threonine 16. Residue threonine 11–threonine 16 participates in substrate binding. The interaction with substrate tRNA stretch occupies residues aspartate 34–glutamine 37.

It belongs to the IPP transferase family. In terms of assembly, monomer. Mg(2+) serves as cofactor.

It catalyses the reaction adenosine(37) in tRNA + dimethylallyl diphosphate = N(6)-dimethylallyladenosine(37) in tRNA + diphosphate. Catalyzes the transfer of a dimethylallyl group onto the adenine at position 37 in tRNAs that read codons beginning with uridine, leading to the formation of N6-(dimethylallyl)adenosine (i(6)A). The chain is tRNA dimethylallyltransferase 2 from Azobacteroides pseudotrichonymphae genomovar. CFP2.